Here is a 131-residue protein sequence, read N- to C-terminus: D-ribose pyranase (131 aa).

Residue H20 is the Proton donor of the active site. Residues D28, H98, and 120-122 contribute to the substrate site; that span reads YAN.

It belongs to the RbsD / FucU family. RbsD subfamily. In terms of assembly, homodecamer.

The protein localises to the cytoplasm. The catalysed reaction is beta-D-ribopyranose = beta-D-ribofuranose. It functions in the pathway carbohydrate metabolism; D-ribose degradation; D-ribose 5-phosphate from beta-D-ribopyranose: step 1/2. In terms of biological role, catalyzes the interconversion of beta-pyran and beta-furan forms of D-ribose. The chain is D-ribose pyranase from Bacillus anthracis (strain A0248).